The following is a 125-amino-acid chain: Protein ApaG (125 aa).

In terms of domain architecture, ApaG spans 1–125 (MADSPRVCVQ…FRLAVPTLIH (125 aa)).

The protein is Protein ApaG of Cronobacter sakazakii (strain ATCC BAA-894) (Enterobacter sakazakii).